We begin with the raw amino-acid sequence, 91 residues long: Large ribosomal subunit protein bL31B (91 aa).

It belongs to the bacterial ribosomal protein bL31 family. Type B subfamily. As to quaternary structure, part of the 50S ribosomal subunit.

The sequence is that of Large ribosomal subunit protein bL31B from Mycolicibacterium vanbaalenii (strain DSM 7251 / JCM 13017 / BCRC 16820 / KCTC 9966 / NRRL B-24157 / PYR-1) (Mycobacterium vanbaalenii).